A 63-amino-acid chain; its full sequence is Large ribosomal subunit protein uL30 (63 aa).

Belongs to the universal ribosomal protein uL30 family. Part of the 50S ribosomal subunit.

In Natranaerobius thermophilus (strain ATCC BAA-1301 / DSM 18059 / JW/NM-WN-LF), this protein is Large ribosomal subunit protein uL30.